The primary structure comprises 1088 residues: RNA-directed RNA polymerase (1088 aa).

In terms of domain architecture, RdRp catalytic spans Leu-501–Ile-687.

The protein belongs to the reoviridae RNA-directed RNA polymerase family. In terms of assembly, interacts with VP3 (Potential). Interacts with VP2; this interaction activates VP1. Interacts with NSP5; this interaction is probably necessary for the formation of functional virus factories. Interacts with NSP2; this interaction is weak. Mg(2+) serves as cofactor.

The protein localises to the virion. It carries out the reaction RNA(n) + a ribonucleoside 5'-triphosphate = RNA(n+1) + diphosphate. In terms of biological role, RNA-directed RNA polymerase that is involved in both transcription and genome replication. Together with VP3 capping enzyme, forms an enzyme complex positioned near the channels situated at each of the five-fold vertices of the core. Following infection, the outermost layer of the virus is lost, leaving a double-layered particle (DLP) made up of the core and VP6 shell. VP1 then catalyzes the transcription of fully conservative plus-strand genomic RNAs that are extruded through the DLP's channels into the cytoplasm where they function as mRNAs for translation of viral proteins. One copy of each of the viral (+)RNAs is also recruited during core assembly, together with newly synthesized polymerase complexes and VP2. The polymerase of these novo-formed particles catalyzes the synthesis of complementary minus-strands leading to dsRNA formation. To do so, the polymerase specifically recognizes and binds 4 bases 5'-UGUG-3' in the conserved 3'-sequence of plus-strand RNA templates. VP2 presumably activates the autoinhibited VP1-RNA complex to coordinate packaging and genome replication. Once dsRNA synthesis is complete, the polymerase switches to the transcriptional mode, thus providing secondary transcription. This chain is RNA-directed RNA polymerase, found in Macaca mulatta (Rhesus macaque).